Reading from the N-terminus, the 386-residue chain is Palmitoyltransferase ZDHHC18 (386 aa).

Positions 1–65 (MKDCEYQQIS…GSGSLGRRPR (65 aa)) are disordered. Topologically, residues 1-88 (MKDCEYQQIS…CGGRLMLAGH (88 aa)) are cytoplasmic. A Phosphoserine modification is found at Ser-19. Positions 27 to 40 (PAAPPGPSPGPAPG) are enriched in pro residues. The segment covering 49 to 59 (SGSGSGSGSGS) has biased composition (gly residues). A helical transmembrane segment spans residues 89–109 (GGVFALTLLLILSTTILFFIF). The Lumenal segment spans residues 110–117 (DCPYLART). A helical transmembrane segment spans residues 118-138 (LTLAIPIIAAILFFFVMSCLL). Topologically, residues 139–233 (QTSFTDPGIL…GNCVGRRNYR (95 aa)) are cytoplasmic. The region spanning 190–240 (KYCFTCKMFRPPRTSHCSVCDNCVERFDHHCPWVGNCVGRRNYRFFYAFIL) is the DHHC domain. The active-site S-palmitoyl cysteine intermediate is the Cys-220. The chain crosses the membrane as a helical span at residues 234-254 (FFYAFILSLSFLTAFIFACVV). At 255 to 275 (THLTLLSQGSNFLSALNKTPA) the chain is on the lumenal side. The helical transmembrane segment at 276–296 (GVLELVICFFSIWSILGLSGF) threads the bilayer. Topologically, residues 297 to 386 (HTYLVASNLT…PDASMVGGHP (90 aa)) are cytoplasmic. Residues 362 to 386 (LPSPIRSDEPACGAKPDASMVGGHP) are disordered.

The protein belongs to the DHHC palmitoyltransferase family. ERF2/ZDHHC9 subfamily.

It localises to the golgi apparatus membrane. It catalyses the reaction L-cysteinyl-[protein] + hexadecanoyl-CoA = S-hexadecanoyl-L-cysteinyl-[protein] + CoA. Functionally, palmitoyltransferase that catalyzes the addition of palmitate onto various protein substrates, such as CGAS, HRAS and LCK. Acts as a negative regulator of the cGAS-STING pathway be mediating palmitoylation and inactivation of CGAS. May also have a palmitoyltransferase activity toward the beta-2 adrenergic receptor/ADRB2 and therefore regulate G protein-coupled receptor signaling. This Rattus norvegicus (Rat) protein is Palmitoyltransferase ZDHHC18.